The sequence spans 381 residues: uncharacterized protein (381 aa).

A run of 9 helical transmembrane segments spans residues leucine 59–methionine 79, glycine 84–methionine 104, valine 147–alanine 167, serine 190–isoleucine 210, leucine 222–isoleucine 242, isoleucine 250–tryptophan 270, histidine 284–alanine 304, leucine 311–phenylalanine 331, and valine 344–leucine 364.

Belongs to the CDP-alcohol phosphatidyltransferase class-I family.

The protein localises to the membrane. This is an uncharacterized protein from Dictyostelium discoideum (Social amoeba).